The chain runs to 554 residues: (Z)-gamma-bisabolene synthase 2 (554 aa).

4 residues coordinate Mg(2+): aspartate 306, aspartate 310, aspartate 450, and aspartate 458. Positions 306 to 310 (DDACD) match the DDXXD motif motif.

It belongs to the terpene synthase family. Tpsa subfamily. It depends on Mg(2+) as a cofactor. Mn(2+) is required as a cofactor. In terms of tissue distribution, predominantly expressed in roots. Expressed in the cortex and the sub-epidermal layers of roots. Also detected in leaf hydathodes and flower stigmata.

The protein localises to the cytoplasm. The catalysed reaction is (2E,6E)-farnesyl diphosphate = (Z)-gamma-bisabolene + diphosphate. The protein operates within secondary metabolite biosynthesis; terpenoid biosynthesis. Involved in sesquiterpene (C15) biosynthesis. The major product is (Z)-gamma-bisabolene with minor amounts of (E)-nerolidol and alpha-bisabolol. In Arabidopsis thaliana (Mouse-ear cress), this protein is (Z)-gamma-bisabolene synthase 2 (TPS13).